Here is a 470-residue protein sequence, read N- to C-terminus: Poly(A) polymerase catalytic subunit (470 aa).

Residues Asp192 and Asp194 contribute to the active site.

It belongs to the poxviridae poly(A) polymerase catalytic subunit family. In terms of assembly, heterodimer of a large (catalytic) subunit and a small (regulatory) subunit.

The catalysed reaction is RNA(n) + ATP = RNA(n)-3'-adenine ribonucleotide + diphosphate. In terms of biological role, polymerase that creates the 3'-poly(A) tail of mRNA's. The protein is Poly(A) polymerase catalytic subunit (PAPL) of Sus scrofa (Pig).